The chain runs to 239 residues: Purine nucleoside phosphorylase DeoD-type (239 aa).

A purine D-ribonucleoside is bound at residue His-5. Phosphate contacts are provided by residues Gly-21, Arg-25, Arg-44, and 88–91 (RVGS). Residues 180–182 (EME) and 204–205 (SD) contribute to the a purine D-ribonucleoside site. Residue Asp-205 is the Proton donor of the active site.

This sequence belongs to the PNP/UDP phosphorylase family. Homohexamer; trimer of homodimers.

The catalysed reaction is a purine D-ribonucleoside + phosphate = a purine nucleobase + alpha-D-ribose 1-phosphate. The enzyme catalyses a purine 2'-deoxy-D-ribonucleoside + phosphate = a purine nucleobase + 2-deoxy-alpha-D-ribose 1-phosphate. Its function is as follows. Catalyzes the reversible phosphorolytic breakdown of the N-glycosidic bond in the beta-(deoxy)ribonucleoside molecules, with the formation of the corresponding free purine bases and pentose-1-phosphate. The protein is Purine nucleoside phosphorylase DeoD-type of Cronobacter sakazakii (strain ATCC BAA-894) (Enterobacter sakazakii).